Reading from the N-terminus, the 71-residue chain is Cell division protein FtsB (71 aa).

Residues 1 to 3 (MKI) lie on the Cytoplasmic side of the membrane. Residues 4 to 21 (LKIFLLSLLFWLQYSLWF) form a helical membrane-spanning segment. The Extracellular segment spans residues 22–71 (GKNGVLDFIKIYRRVTIEKKNNEYLDMRNNQIILEIENFNNHINKDKKKT).

Belongs to the FtsB family.

It localises to the cell membrane. Its function is as follows. Essential cell division protein. May link together the upstream cell division proteins, which are predominantly cytoplasmic, with the downstream cell division proteins, which are predominantly extracellular. This Buchnera aphidicola subsp. Acyrthosiphon pisum (strain APS) (Acyrthosiphon pisum symbiotic bacterium) protein is Cell division protein FtsB.